A 71-amino-acid polypeptide reads, in one-letter code: Large ribosomal subunit protein bL28 (71 aa).

The protein belongs to the bacterial ribosomal protein bL28 family.

This Finegoldia magna (strain ATCC 29328 / DSM 20472 / WAL 2508) (Peptostreptococcus magnus) protein is Large ribosomal subunit protein bL28.